A 334-amino-acid chain; its full sequence is Heat-inducible transcription repressor HrcA (334 aa).

The protein belongs to the HrcA family.

Functionally, negative regulator of class I heat shock genes (grpE-dnaK-dnaJ and groELS operons). Prevents heat-shock induction of these operons. This Albidiferax ferrireducens (strain ATCC BAA-621 / DSM 15236 / T118) (Rhodoferax ferrireducens) protein is Heat-inducible transcription repressor HrcA.